We begin with the raw amino-acid sequence, 1155 residues long: DNA-directed RNA polymerase subunit beta (1155 aa).

This sequence belongs to the RNA polymerase beta chain family. The RNAP catalytic core consists of 2 alpha, 1 beta, 1 beta' and 1 omega subunit. When a sigma factor is associated with the core the holoenzyme is formed, which can initiate transcription.

The catalysed reaction is RNA(n) + a ribonucleoside 5'-triphosphate = RNA(n+1) + diphosphate. DNA-dependent RNA polymerase catalyzes the transcription of DNA into RNA using the four ribonucleoside triphosphates as substrates. In Borrelia turicatae (strain 91E135), this protein is DNA-directed RNA polymerase subunit beta.